The following is a 224-amino-acid chain: dTDP-fucosamine acetyltransferase (224 aa).

In terms of domain architecture, N-acetyltransferase spans 94 to 224 (PALRQLASAA…VESTAYWLYR (131 aa)). Residues 168–174 (LAGRGAG), N201, and R207 contribute to the acetyl-CoA site. Catalysis depends on Y208, which acts as the Proton donor.

The protein belongs to the WecD family. In terms of assembly, homodimer.

The enzyme catalyses dTDP-4-amino-4,6-dideoxy-alpha-D-galactose + acetyl-CoA = dTDP-4-acetamido-4,6-dideoxy-alpha-D-galactose + CoA + H(+). It participates in bacterial outer membrane biogenesis; enterobacterial common antigen biosynthesis. Functionally, catalyzes the acetylation of dTDP-fucosamine (dTDP-4-amino-4,6-dideoxy-D-galactose) to dTDP-Fuc4NAc, which is utilized in the biosynthesis of the enterobacterial common antigen (ECA). The polypeptide is dTDP-fucosamine acetyltransferase (Escherichia coli O6:H1 (strain CFT073 / ATCC 700928 / UPEC)).